The primary structure comprises 278 residues: Phosphatidylglycerol--prolipoprotein diacylglyceryl transferase (278 aa).

Transmembrane regions (helical) follow at residues 19–39 (WYGILMATGVLVATLMAINEG), 49–69 (FIDFLLWAVPIGFIGARIYYV), 83–103 (IIAIWNGGIAIYGGLIAGLIV), and 112–132 (MLPPFLMLDIIAPGVMAAQVI). Arginine 134 provides a ligand contact to a 1,2-diacyl-sn-glycero-3-phospho-(1'-sn-glycerol). 3 helical membrane-spanning segments follow: residues 174-194 (QPTYLYESALNLVGLILILSL), 204-224 (GEVFFSYVIWYAAVRFFVEGM), and 235-255 (IRVSQALSLILFFGAIILWVY).

It belongs to the Lgt family.

The protein resides in the cell membrane. It catalyses the reaction L-cysteinyl-[prolipoprotein] + a 1,2-diacyl-sn-glycero-3-phospho-(1'-sn-glycerol) = an S-1,2-diacyl-sn-glyceryl-L-cysteinyl-[prolipoprotein] + sn-glycerol 1-phosphate + H(+). The protein operates within protein modification; lipoprotein biosynthesis (diacylglyceryl transfer). Catalyzes the transfer of the diacylglyceryl group from phosphatidylglycerol to the sulfhydryl group of the N-terminal cysteine of a prolipoprotein, the first step in the formation of mature lipoproteins. This Lactobacillus gasseri (strain ATCC 33323 / DSM 20243 / BCRC 14619 / CIP 102991 / JCM 1131 / KCTC 3163 / NCIMB 11718 / NCTC 13722 / AM63) protein is Phosphatidylglycerol--prolipoprotein diacylglyceryl transferase.